Reading from the N-terminus, the 245-residue chain is 1-(5-phosphoribosyl)-5-[(5-phosphoribosylamino)methylideneamino] imidazole-4-carboxamide isomerase (245 aa).

D7 (proton acceptor) is an active-site residue. D129 (proton donor) is an active-site residue.

Belongs to the HisA/HisF family.

It localises to the cytoplasm. It catalyses the reaction 1-(5-phospho-beta-D-ribosyl)-5-[(5-phospho-beta-D-ribosylamino)methylideneamino]imidazole-4-carboxamide = 5-[(5-phospho-1-deoxy-D-ribulos-1-ylimino)methylamino]-1-(5-phospho-beta-D-ribosyl)imidazole-4-carboxamide. The protein operates within amino-acid biosynthesis; L-histidine biosynthesis; L-histidine from 5-phospho-alpha-D-ribose 1-diphosphate: step 4/9. This chain is 1-(5-phosphoribosyl)-5-[(5-phosphoribosylamino)methylideneamino] imidazole-4-carboxamide isomerase, found in Shewanella sp. (strain ANA-3).